A 99-amino-acid chain; its full sequence is Protein S100-Z (99 aa).

2 consecutive EF-hand domains span residues 13–48 and 50–85; these read IRIFHRYSGKERKRFKLSKGELKLLLQRELTEFLSC and KETQLVDKIVQDLDANKDNEVDFNEFVVMVAALTVA. Ca(2+) contacts are provided by serine 20, glutamate 23, lysine 28, glutamate 33, aspartate 63, asparagine 65, aspartate 67, glutamate 69, and glutamate 74.

Belongs to the S-100 family. As to quaternary structure, homodimer. Interacts with S100P. As to expression, highest level of expression in spleen and leukocytes.

The polypeptide is Protein S100-Z (Homo sapiens (Human)).